A 329-amino-acid chain; its full sequence is DNA-directed RNA polymerase subunit alpha (329 aa).

The segment at 1 to 234 (MSGSVTEFLK…EQLDAFVELR (234 aa)) is alpha N-terminal domain (alpha-NTD). The alpha C-terminal domain (alpha-CTD) stretch occupies residues 248–329 (FDPILLRPVD…WPPESIAEKD (82 aa)).

This sequence belongs to the RNA polymerase alpha chain family. As to quaternary structure, homodimer. The RNAP catalytic core consists of 2 alpha, 1 beta, 1 beta' and 1 omega subunit. When a sigma factor is associated with the core the holoenzyme is formed, which can initiate transcription.

The enzyme catalyses RNA(n) + a ribonucleoside 5'-triphosphate = RNA(n+1) + diphosphate. Its function is as follows. DNA-dependent RNA polymerase catalyzes the transcription of DNA into RNA using the four ribonucleoside triphosphates as substrates. The chain is DNA-directed RNA polymerase subunit alpha from Pseudoalteromonas atlantica (strain T6c / ATCC BAA-1087).